Consider the following 255-residue polypeptide: Type III pantothenate kinase (255 aa).

An ATP-binding site is contributed by aspartate 12 to lysine 19. Glycine 109–leucine 112 lines the substrate pocket. The active-site Proton acceptor is the aspartate 111. Threonine 133 contributes to the ATP binding site. Threonine 185 is a substrate binding site.

This sequence belongs to the type III pantothenate kinase family. In terms of assembly, homodimer. The cofactor is NH4(+). K(+) serves as cofactor.

It localises to the cytoplasm. It carries out the reaction (R)-pantothenate + ATP = (R)-4'-phosphopantothenate + ADP + H(+). Its pathway is cofactor biosynthesis; coenzyme A biosynthesis; CoA from (R)-pantothenate: step 1/5. In terms of biological role, catalyzes the phosphorylation of pantothenate (Pan), the first step in CoA biosynthesis. The protein is Type III pantothenate kinase of Malacoplasma penetrans (strain HF-2) (Mycoplasma penetrans).